A 60-amino-acid polypeptide reads, in one-letter code: Large ribosomal subunit protein bL32 (60 aa).

This sequence belongs to the bacterial ribosomal protein bL32 family.

The protein is Large ribosomal subunit protein bL32 of Pseudothermotoga lettingae (strain ATCC BAA-301 / DSM 14385 / NBRC 107922 / TMO) (Thermotoga lettingae).